The sequence spans 219 residues: Small ribosomal subunit protein uS3c (219 aa).

The 76-residue stretch at 43 to 118 (IKNYVQKNMK…KLNIAITRIA (76 aa)) folds into the KH type-2 domain.

The protein belongs to the universal ribosomal protein uS3 family. As to quaternary structure, part of the 30S ribosomal subunit.

It is found in the plastid. The protein resides in the chloroplast. This chain is Small ribosomal subunit protein uS3c (rps3), found in Panax ginseng (Korean ginseng).